Here is a 235-residue protein sequence, read N- to C-terminus: 7-cyano-7-deazaguanine synthase (235 aa).

Position 12–22 (12–22) interacts with ATP; sequence FSGGQDSTTCL. 4 residues coordinate Zn(2+): Cys-200, Cys-215, Cys-218, and Cys-221.

It belongs to the QueC family. Requires Zn(2+) as cofactor.

It carries out the reaction 7-carboxy-7-deazaguanine + NH4(+) + ATP = 7-cyano-7-deazaguanine + ADP + phosphate + H2O + H(+). Its pathway is purine metabolism; 7-cyano-7-deazaguanine biosynthesis. Catalyzes the ATP-dependent conversion of 7-carboxy-7-deazaguanine (CDG) to 7-cyano-7-deazaguanine (preQ(0)). This is 7-cyano-7-deazaguanine synthase from Leptothrix cholodnii (strain ATCC 51168 / LMG 8142 / SP-6) (Leptothrix discophora (strain SP-6)).